An 888-amino-acid polypeptide reads, in one-letter code: Dilute domain-containing protein YPR089W (888 aa).

Residues 360–745 (DIVLQSYWLS…KKFLNNKIKD (386 aa)) form the Dilute domain. 3 disordered regions span residues 462–504 (KEQQ…NNSS), 805–827 (KQRQNEPQISRTNSGTSDFTGDE), and 865–888 (LNIPSSTAQRPAWSNNDDMEQNPW). 2 stretches are compositionally biased toward polar residues: residues 809 to 823 (NEPQISRTNSGTSDF) and 867 to 880 (IPSSTAQRPAWSNN).

It localises to the golgi apparatus. This Saccharomyces cerevisiae (strain ATCC 204508 / S288c) (Baker's yeast) protein is Dilute domain-containing protein YPR089W.